Here is a 384-residue protein sequence, read N- to C-terminus: 1-deoxy-D-xylulose 5-phosphate reductoisomerase (384 aa).

NADPH-binding residues include Thr10, Gly11, Ser12, Ile13, Gly36, Asn38, and Asn122. Lys123 serves as a coordination point for 1-deoxy-D-xylulose 5-phosphate. Glu124 is an NADPH binding site. Mn(2+) is bound at residue Asp148. The 1-deoxy-D-xylulose 5-phosphate site is built by Ser149, Glu150, Ser174, and His197. Residue Glu150 coordinates Mn(2+). Position 203 (Gly203) interacts with NADPH. Residues Ser210, Asn215, Lys216, and Glu219 each contribute to the 1-deoxy-D-xylulose 5-phosphate site. Glu219 is a Mn(2+) binding site.

This sequence belongs to the DXR family. Mg(2+) is required as a cofactor. The cofactor is Mn(2+).

It carries out the reaction 2-C-methyl-D-erythritol 4-phosphate + NADP(+) = 1-deoxy-D-xylulose 5-phosphate + NADPH + H(+). The protein operates within isoprenoid biosynthesis; isopentenyl diphosphate biosynthesis via DXP pathway; isopentenyl diphosphate from 1-deoxy-D-xylulose 5-phosphate: step 1/6. Catalyzes the NADPH-dependent rearrangement and reduction of 1-deoxy-D-xylulose-5-phosphate (DXP) to 2-C-methyl-D-erythritol 4-phosphate (MEP). The chain is 1-deoxy-D-xylulose 5-phosphate reductoisomerase from Geobacter metallireducens (strain ATCC 53774 / DSM 7210 / GS-15).